Reading from the N-terminus, the 323-residue chain is Beta-ketoacyl-[acyl-carrier-protein] synthase III (323 aa).

Catalysis depends on residues Cys114 and His250. The ACP-binding stretch occupies residues 251–255 (QANLR). The active site involves Asn280.

It belongs to the thiolase-like superfamily. FabH family. In terms of assembly, homodimer.

It is found in the cytoplasm. It catalyses the reaction malonyl-[ACP] + acetyl-CoA + H(+) = 3-oxobutanoyl-[ACP] + CO2 + CoA. Its pathway is lipid metabolism; fatty acid biosynthesis. Its function is as follows. Catalyzes the condensation reaction of fatty acid synthesis by the addition to an acyl acceptor of two carbons from malonyl-ACP. Catalyzes the first condensation reaction which initiates fatty acid synthesis and may therefore play a role in governing the total rate of fatty acid production. Possesses both acetoacetyl-ACP synthase and acetyl transacylase activities. Its substrate specificity determines the biosynthesis of branched-chain and/or straight-chain of fatty acids. This Cereibacter sphaeroides (strain ATCC 17025 / ATH 2.4.3) (Rhodobacter sphaeroides) protein is Beta-ketoacyl-[acyl-carrier-protein] synthase III.